Here is a 280-residue protein sequence, read N- to C-terminus: Diaminopimelate epimerase (280 aa).

Substrate is bound by residues asparagine 12, glutamine 45, and asparagine 65. The active-site Proton donor is cysteine 74. Substrate-binding positions include 75–76 (GN), asparagine 163, asparagine 196, and 214–215 (ER). The active-site Proton acceptor is cysteine 223. Residue 224–225 (GT) participates in substrate binding.

Belongs to the diaminopimelate epimerase family. Homodimer.

The protein localises to the cytoplasm. It carries out the reaction (2S,6S)-2,6-diaminopimelate = meso-2,6-diaminopimelate. It functions in the pathway amino-acid biosynthesis; L-lysine biosynthesis via DAP pathway; DL-2,6-diaminopimelate from LL-2,6-diaminopimelate: step 1/1. Catalyzes the stereoinversion of LL-2,6-diaminopimelate (L,L-DAP) to meso-diaminopimelate (meso-DAP), a precursor of L-lysine and an essential component of the bacterial peptidoglycan. The chain is Diaminopimelate epimerase from Shewanella sediminis (strain HAW-EB3).